Consider the following 306-residue polypeptide: Ribonuclease Z (306 aa).

Zn(2+) contacts are provided by His63, His65, Asp67, His68, His141, Asp208, and His266. Residue Asp67 is the Proton acceptor of the active site.

Belongs to the RNase Z family. Homodimer. Zn(2+) is required as a cofactor.

It catalyses the reaction Endonucleolytic cleavage of RNA, removing extra 3' nucleotides from tRNA precursor, generating 3' termini of tRNAs. A 3'-hydroxy group is left at the tRNA terminus and a 5'-phosphoryl group is left at the trailer molecule.. Zinc phosphodiesterase, which displays some tRNA 3'-processing endonuclease activity. Probably involved in tRNA maturation, by removing a 3'-trailer from precursor tRNA. This Chlamydia caviae (strain ATCC VR-813 / DSM 19441 / 03DC25 / GPIC) (Chlamydophila caviae) protein is Ribonuclease Z.